Reading from the N-terminus, the 496-residue chain is MSAKFEISFSKSAKLNSGLAILLKTAEADAAAGAETADPAGVIAKAAKIARFSGKSMAALDIVAPEGAPVERIVVLGLGKAAELTAHDWLKAGGAAASKIKNTDRAAVFLDVPGLTTDARAAADFALGMLLRAYSFDSYKTKKNDDEEKPAKSVKVTIVTADASGAKKAFSDSEAIAGGVNLARDLVNEPPNALGPVEFAARAKELETLGVEVEILTEKEMRRLGMGALLGVAQGSVRPPRLAVMQWKGGRAKDRPIAFIGKGVVFDTGGISIKPAAGMEDMKGDMGGAAAVTGLMHVLASRKAAVNAIGIIGLVENMPDGNAQRPGDIVTSMSGQTIEVINTDAEGRLVLCDALWYCNDRFKPQFMINLATLTGAIVVALGNVHAGLFSNDDQLSARLTAAGLSTNEKLWRMPLGKDYDKLIDSKFADMKNTGGRQAGSITAAHFLKRFVQDTPWAHLDIAGTAMGSPQDEINQSWGSGFGVRLLDELVRAHYEA.

The Mn(2+) site is built by Lys262 and Asp267. Residue Lys274 is part of the active site. Mn(2+) is bound by residues Asp285, Asp344, and Glu346. Residue Arg348 is part of the active site.

This sequence belongs to the peptidase M17 family. Requires Mn(2+) as cofactor.

The protein localises to the cytoplasm. The enzyme catalyses Release of an N-terminal amino acid, Xaa-|-Yaa-, in which Xaa is preferably Leu, but may be other amino acids including Pro although not Arg or Lys, and Yaa may be Pro. Amino acid amides and methyl esters are also readily hydrolyzed, but rates on arylamides are exceedingly low.. It carries out the reaction Release of an N-terminal amino acid, preferentially leucine, but not glutamic or aspartic acids.. Its function is as follows. Presumably involved in the processing and regular turnover of intracellular proteins. Catalyzes the removal of unsubstituted N-terminal amino acids from various peptides. The polypeptide is Probable cytosol aminopeptidase (Rhizobium etli (strain CIAT 652)).